The sequence spans 146 residues: Transcriptional regulator MraZ (146 aa).

SpoVT-AbrB domains are found at residues 5-47 (EYYH…TITD) and 76-119 (SIQV…AKEK).

This sequence belongs to the MraZ family. In terms of assembly, forms oligomers.

Its subcellular location is the cytoplasm. It is found in the nucleoid. The polypeptide is Transcriptional regulator MraZ (Dictyoglomus thermophilum (strain ATCC 35947 / DSM 3960 / H-6-12)).